The chain runs to 248 residues: Ferric nitrobindin-like protein (248 aa).

Composition is skewed to polar residues over residues 1–25 and 32–43; these read MSSD…TNSG and QAVNLAAEQSKS. Positions 1–49 are disordered; that stretch reads MSSDKANNQSPDQGANTPAESTNSGPKLDGNQAVNLAAEQSKSTADKNL. The short motif at 82–88 is the GXWXGXG element; the sequence is GVWRGQG. The tract at residues 118 to 147 is disordered; it reads SRTWKINPPAEEGAEADGDEASAESAGEPE. The segment covering 129 to 139 has biased composition (acidic residues); it reads EGAEADGDEAS.

This sequence belongs to the nitrobindin family.

The polypeptide is Ferric nitrobindin-like protein (Corynebacterium urealyticum (strain ATCC 43042 / DSM 7109)).